Reading from the N-terminus, the 276-residue chain is Carboxysome assembly protein CcmO (276 aa).

BMC domains are found at residues Ala-16–Pro-100 and Ala-120–Pro-204. Disordered stretches follow at residues Met-200–Pro-219 and Gln-252–Gln-276.

The protein belongs to the bacterial microcompartments protein family. As to quaternary structure, homooligomerizes, possibly as a trimer, interacts with CcmK2 in the carboxysome.

It localises to the carboxysome. Its function is as follows. Required for formation of the carboxysome, a polyhedral inclusion where RuBisCO (ribulose bisphosphate carboxylase, rbcL-rbcS) is sequestered. Required for recruitment of major shell protein CcmK2 to the pre-carboxysome. Suggested to be a carboxysome shell protein, but it is not detected in gels, mass spectrometry or by protein sequencing. In terms of biological role, beta-carboxysome assembly initiates when soluble RuBisCO is condensed into a liquid matrix in a pre-carboxysome by the RbcS-like domains of probably both CcmM58 and CcmM35. CcmN interacts with the N-terminus of CcmM58, and then recruits the CcmK2 major shell protein via CcmN's encapsulation peptide. Shell formation requires CcmK proteins and CcmO. CcmL caps the otherwise elongated carboxysome. Once fully encapsulated carboxysomes are formed, they migrate within the cell probably via interactions with the cytoskeleton. This Synechococcus elongatus (strain ATCC 33912 / PCC 7942 / FACHB-805) (Anacystis nidulans R2) protein is Carboxysome assembly protein CcmO.